We begin with the raw amino-acid sequence, 545 residues long: ATP synthase subunit alpha, mitochondrial (545 aa).

A mitochondrion-targeting transit peptide spans 1–35; that stretch reads MLARTAAIRSLSRTLINSTKAARPAAAALASTRRL. Phosphoserine occurs at positions 57 and 178. An ATP-binding site is contributed by 206 to 213; sequence GDRQTGKT.

This sequence belongs to the ATPase alpha/beta chains family. In terms of assembly, F-type ATPases have 2 components, CF(1) - the catalytic core - and CF(0) - the membrane proton channel. CF(1) has five subunits: alpha(3), beta(3), gamma(1), delta(1), epsilon(1). CF(0) has three main subunits: a, b and c.

The protein resides in the mitochondrion inner membrane. Mitochondrial membrane ATP synthase (F(1)F(0) ATP synthase or Complex V) produces ATP from ADP in the presence of a proton gradient across the membrane which is generated by electron transport complexes of the respiratory chain. F-type ATPases consist of two structural domains, F(1) - containing the extramembraneous catalytic core, and F(0) - containing the membrane proton channel, linked together by a central stalk and a peripheral stalk. During catalysis, ATP synthesis in the catalytic domain of F(1) is coupled via a rotary mechanism of the central stalk subunits to proton translocation. Subunits alpha and beta form the catalytic core in F(1). Rotation of the central stalk against the surrounding alpha(3)beta(3) subunits leads to hydrolysis of ATP in three separate catalytic sites on the beta subunits. Subunit alpha does not bear the catalytic high-affinity ATP-binding sites. The sequence is that of ATP synthase subunit alpha, mitochondrial (ATP1) from Saccharomyces cerevisiae (strain ATCC 204508 / S288c) (Baker's yeast).